The following is a 216-amino-acid chain: ATP phosphoribosyltransferase (216 aa).

Belongs to the ATP phosphoribosyltransferase family. Short subfamily. As to quaternary structure, heteromultimer composed of HisG and HisZ subunits.

The protein resides in the cytoplasm. It carries out the reaction 1-(5-phospho-beta-D-ribosyl)-ATP + diphosphate = 5-phospho-alpha-D-ribose 1-diphosphate + ATP. Its pathway is amino-acid biosynthesis; L-histidine biosynthesis; L-histidine from 5-phospho-alpha-D-ribose 1-diphosphate: step 1/9. Its function is as follows. Catalyzes the condensation of ATP and 5-phosphoribose 1-diphosphate to form N'-(5'-phosphoribosyl)-ATP (PR-ATP). Has a crucial role in the pathway because the rate of histidine biosynthesis seems to be controlled primarily by regulation of HisG enzymatic activity. The polypeptide is ATP phosphoribosyltransferase (Lachnospira eligens (strain ATCC 27750 / DSM 3376 / VPI C15-48 / C15-B4) (Eubacterium eligens)).